Reading from the N-terminus, the 340-residue chain is Tetraacyldisaccharide 4'-kinase (340 aa).

His-51–Thr-58 contributes to the ATP binding site.

It belongs to the LpxK family.

It carries out the reaction a lipid A disaccharide + ATP = a lipid IVA + ADP + H(+). The protein operates within glycolipid biosynthesis; lipid IV(A) biosynthesis; lipid IV(A) from (3R)-3-hydroxytetradecanoyl-[acyl-carrier-protein] and UDP-N-acetyl-alpha-D-glucosamine: step 6/6. In terms of biological role, transfers the gamma-phosphate of ATP to the 4'-position of a tetraacyldisaccharide 1-phosphate intermediate (termed DS-1-P) to form tetraacyldisaccharide 1,4'-bis-phosphate (lipid IVA). The polypeptide is Tetraacyldisaccharide 4'-kinase (Rhodopseudomonas palustris (strain TIE-1)).